Reading from the N-terminus, the 769-residue chain is Phenylalanine--tRNA ligase beta subunit (769 aa).

In terms of domain architecture, tRNA-binding spans 40–141; sequence GKLLTIARVA…GEPIPGCEPD (102 aa). In terms of domain architecture, B5 spans 389-467; the sequence is PAPPPIELPL…RMIGYDSIAP (79 aa). Positions 445, 451, 454, and 455 each coordinate Mg(2+). The 93-residue stretch at 676 to 768 folds into the FDX-ACB domain; it reads RRYPSSAFDL…GMRAKGYELR (93 aa).

Belongs to the phenylalanyl-tRNA synthetase beta subunit family. Type 1 subfamily. As to quaternary structure, tetramer of two alpha and two beta subunits. Requires Mg(2+) as cofactor.

The protein localises to the cytoplasm. It carries out the reaction tRNA(Phe) + L-phenylalanine + ATP = L-phenylalanyl-tRNA(Phe) + AMP + diphosphate + H(+). This Solibacter usitatus (strain Ellin6076) protein is Phenylalanine--tRNA ligase beta subunit.